A 60-amino-acid polypeptide reads, in one-letter code: Movement protein TGBp3 (60 aa).

Residues 1 to 6 (MHYIDW) are Lumenal-facing. A helical membrane pass occupies residues 7 to 23 (VILLTFAAALIVCLTPK). At 24–60 (PEPCIITVSGASATVSNCPNPELLTDLVKALKPAKPV) the chain is on the cytoplasmic side.

This sequence belongs to the Tymovirales TGBp3 protein family.

Its subcellular location is the host endoplasmic reticulum membrane. Functionally, plays a role in viral cell-to-cell propagation, by facilitating genome transport to neighboring plant cells through plasmosdesmata. May induce the formation of granular vesicles derived from the Endoplasmic reticulum, which align on actin filaments. The chain is Movement protein TGBp3 from Citrus (ICRSV).